The following is a 232-amino-acid chain: Large ribosomal subunit protein uL1 (232 aa).

The protein belongs to the universal ribosomal protein uL1 family. Part of the 50S ribosomal subunit.

Functionally, binds directly to 23S rRNA. The L1 stalk is quite mobile in the ribosome, and is involved in E site tRNA release. Protein L1 is also a translational repressor protein, it controls the translation of the L11 operon by binding to its mRNA. The polypeptide is Large ribosomal subunit protein uL1 (Xanthomonas oryzae pv. oryzae (strain MAFF 311018)).